Reading from the N-terminus, the 799-residue chain is Protein translocase subunit SecA (799 aa).

Residues Gln85, 103-107 (GEGKT), and Asp504 each bind ATP.

The protein belongs to the SecA family. As to quaternary structure, monomer and homodimer. Part of the essential Sec protein translocation apparatus which comprises SecA, SecYEG and auxiliary proteins SecDF. Other proteins may also be involved.

Its subcellular location is the cell membrane. The protein localises to the cytoplasm. The catalysed reaction is ATP + H2O + cellular proteinSide 1 = ADP + phosphate + cellular proteinSide 2.. In terms of biological role, part of the Sec protein translocase complex. Interacts with the SecYEG preprotein conducting channel. Has a central role in coupling the hydrolysis of ATP to the transfer of proteins into and across the cell membrane, serving as an ATP-driven molecular motor driving the stepwise translocation of polypeptide chains across the membrane. The sequence is that of Protein translocase subunit SecA from Lactobacillus acidophilus (strain ATCC 700396 / NCK56 / N2 / NCFM).